The primary structure comprises 380 residues: Flap endonuclease 1 (380 aa).

The tract at residues 1 to 104 (MGIQGLAKLI…GELAKRSERR (104 aa)) is N-domain. Symmetric dimethylarginine; by PRMT5 is present on arginine 19. Aspartate 34 is a Mg(2+) binding site. Residues arginine 47 and arginine 70 each coordinate DNA. An N6-acetyllysine modification is found at lysine 80. Aspartate 86 is a Mg(2+) binding site. Symmetric dimethylarginine; by PRMT5 occurs at positions 100 and 104. Residues 122 to 253 (EVEKFTKRLV…KRAVDLIQKH (132 aa)) form an I-domain region. The Mg(2+) site is built by glutamate 158, glutamate 160, aspartate 179, and aspartate 181. Glutamate 158 lines the DNA pocket. Phosphoserine; by CDK2 is present on serine 187. A Symmetric dimethylarginine; by PRMT5 modification is found at arginine 192. Serine 197 is modified (phosphoserine). DNA-binding residues include glycine 231 and aspartate 233. Aspartate 233 contacts Mg(2+). Phosphoserine is present on residues serine 255, serine 293, and serine 335. The segment at 327-380 (RLSKSRQGSTQGRLDDFFKVTGSLSSAKRKEPEPKGSTKKKAKTGAAGKFKRGK) is disordered. Threonine 336 is modified (phosphothreonine). Positions 336 to 344 (TQGRLDDFF) are interaction with PCNA. Position 354 is an N6-acetyllysine (lysine 354). The span at 363–380 (STKKKAKTGAAGKFKRGK) shows a compositional bias: basic residues. Position 364 is a phosphothreonine (threonine 364). 3 positions are modified to N6-acetyllysine: lysine 375, lysine 377, and lysine 380.

This sequence belongs to the XPG/RAD2 endonuclease family. FEN1 subfamily. As to quaternary structure, interacts with PCNA. Three molecules of FEN1 bind to one PCNA trimer with each molecule binding to one PCNA monomer. PCNA stimulates the nuclease activity without altering cleavage specificity. The C-terminal domain binds EP300; can bind simultaneously to both PCNA and EP300. Interacts with DDX11; this interaction is direct and increases flap endonuclease activity of FEN1. Interacts with WDR4; regulating its endonuclease activity. Interacts with POLB. Mg(2+) is required as a cofactor. In terms of processing, acetylated by EP300. Acetylation inhibits both endonuclease and exonuclease activity. Acetylation also reduces DNA-binding activity but does not affect interaction with PCNA or EP300. Phosphorylation upon DNA damage induces relocalization to the nuclear plasma. Phosphorylation at Ser-187 by CDK2 occurs during late S-phase and results in dissociation from PCNA. Post-translationally, methylation at Arg-192 by PRMT5 impedes Ser-187 phosphorylation and increases interaction with PCNA.

It localises to the nucleus. It is found in the nucleolus. The protein resides in the nucleoplasm. The protein localises to the mitochondrion. In terms of biological role, structure-specific nuclease with 5'-flap endonuclease and 5'-3' exonuclease activities involved in DNA replication and repair. During DNA replication, cleaves the 5'-overhanging flap structure that is generated by displacement synthesis when DNA polymerase encounters the 5'-end of a downstream Okazaki fragment. It enters the flap from the 5'-end and then tracks to cleave the flap base, leaving a nick for ligation. Also involved in the long patch base excision repair (LP-BER) pathway, by cleaving within the apurinic/apyrimidinic (AP) site-terminated flap. Acts as a genome stabilization factor that prevents flaps from equilibrating into structures that lead to duplications and deletions. Also possesses 5'-3' exonuclease activity on nicked or gapped double-stranded DNA, and exhibits RNase H activity. Also involved in replication and repair of rDNA and in repairing mitochondrial DNA. In Homo sapiens (Human), this protein is Flap endonuclease 1.